The primary structure comprises 146 residues: Hemoglobin subunit beta (146 aa).

The Globin domain maps to His2–His146. Heme b contacts are provided by His63 and His92.

This sequence belongs to the globin family. As to quaternary structure, heterotetramer of two alpha chains and two beta chains. In terms of tissue distribution, red blood cells.

Involved in oxygen transport from the lung to the various peripheral tissues. The protein is Hemoglobin subunit beta (HBB) of Streptopelia orientalis (Eastern turtle dove).